Reading from the N-terminus, the 450-residue chain is UDP-N-acetylmuramoylalanine--D-glutamate ligase (450 aa).

Residue 119–125 (GSNGKTT) coordinates ATP.

Belongs to the MurCDEF family.

The protein localises to the cytoplasm. It catalyses the reaction UDP-N-acetyl-alpha-D-muramoyl-L-alanine + D-glutamate + ATP = UDP-N-acetyl-alpha-D-muramoyl-L-alanyl-D-glutamate + ADP + phosphate + H(+). It participates in cell wall biogenesis; peptidoglycan biosynthesis. Its function is as follows. Cell wall formation. Catalyzes the addition of glutamate to the nucleotide precursor UDP-N-acetylmuramoyl-L-alanine (UMA). The polypeptide is UDP-N-acetylmuramoylalanine--D-glutamate ligase (Streptococcus sanguinis (strain SK36)).